The sequence spans 591 residues: Probable translation initiation factor IF-2 (591 aa).

The tr-type G domain occupies 7-223; sequence LRTPIVCVMG…LLGLAQRFLE (217 aa). Residues 16-23 form a G1 region; sequence GHVDHGKT. 16–23 provides a ligand contact to GTP; the sequence is GHVDHGKT. Residues 41-45 form a G2 region; sequence AITQH. Residues 78–81 form a G3 region; the sequence is DTPG. Residues 78–82 and 132–135 each bind GTP; these read DTPGH and NKID. The segment at 132 to 135 is G4; the sequence is NKID. Residues 200 to 202 form a G5 region; sequence SAI.

The protein belongs to the TRAFAC class translation factor GTPase superfamily. Classic translation factor GTPase family. IF-2 subfamily.

Functionally, function in general translation initiation by promoting the binding of the formylmethionine-tRNA to ribosomes. Seems to function along with eIF-2. This is Probable translation initiation factor IF-2 from Methanococcoides burtonii (strain DSM 6242 / NBRC 107633 / OCM 468 / ACE-M).